The chain runs to 896 residues: Glutamate receptor 2.4 (896 aa).

The N-terminal stretch at 1–24 is a signal peptide; that stretch reads MKRHLNDVVLVFLVFIFGVKLGKG. Topologically, residues 25 to 565 are extracellular; the sequence is QNTTIQVINV…SSLIFFKPLT (541 aa). N-linked (GlcNAc...) asparagine glycosylation is found at Asn26, Asn46, Asn53, Asn204, Asn267, Asn331, Asn341, and Asn527. Residues 566 to 586 form a helical membrane-spanning segment; the sequence is PGLWGMTLGSFFVVGFVVWIL. The Cytoplasmic portion of the chain corresponds to 587-595; it reads EHRVNSEFT. Residues 596–616 traverse the membrane as a helical segment; the sequence is GPPQYQISTMFWFAFSIMVFA. Topologically, residues 617-620 are cytoplasmic; the sequence is PRER. A helical transmembrane segment spans residues 621–641; it reads VMSFTARVVVITWYFIVLVLT. The Extracellular segment spans residues 642-815; that stretch reads QSYTASLSSL…VSFRKLSLDS (174 aa). A helical transmembrane segment spans residues 816–836; that stretch reads FLLLFVAAATVCTLALLKFVI. The Cytoplasmic portion of the chain corresponds to 837-896; that stretch reads CFLIQNRIILNDEFYRGKRMKEMWLKFMESDGESYISRVRSTCPQVLIQPREEDIDPING.

Belongs to the glutamate-gated ion channel (TC 1.A.10.1) family. As to quaternary structure, may form heteromers. In terms of tissue distribution, expressed predominantly in roots.

The protein localises to the membrane. In terms of biological role, glutamate-gated receptor that probably acts as a non-selective cation channel. May be involved in light-signal transduction and calcium homeostasis via the regulation of calcium influx into cells. The chain is Glutamate receptor 2.4 (GLR2.4) from Arabidopsis thaliana (Mouse-ear cress).